The following is a 496-amino-acid chain: Catalase-A (496 aa).

Catalysis depends on residues H54 and N128. A heme-binding site is contributed by Y338. Residues 494–496 carry the Microbody targeting signal motif; sequence SNL.

This sequence belongs to the catalase family. Requires heme as cofactor.

The protein resides in the peroxisome matrix. It catalyses the reaction 2 H2O2 = O2 + 2 H2O. In terms of biological role, catalyzes the degradation of hydrogen peroxide (H(2)O(2)) generated by peroxisomal oxidases to water and oxygen, thereby protecting cells from the toxic effects of hydrogen peroxide. The protein is Catalase-A (catA) of Dictyostelium discoideum (Social amoeba).